The primary structure comprises 139 residues: D-ribose pyranase (139 aa).

The Proton donor role is filled by histidine 20. Substrate-binding positions include aspartate 28, histidine 106, and 128–130; that span reads YAN.

It belongs to the RbsD / FucU family. RbsD subfamily. In terms of assembly, homodecamer.

Its subcellular location is the cytoplasm. The enzyme catalyses beta-D-ribopyranose = beta-D-ribofuranose. Its pathway is carbohydrate metabolism; D-ribose degradation; D-ribose 5-phosphate from beta-D-ribopyranose: step 1/2. Catalyzes the interconversion of beta-pyran and beta-furan forms of D-ribose. In Photorhabdus laumondii subsp. laumondii (strain DSM 15139 / CIP 105565 / TT01) (Photorhabdus luminescens subsp. laumondii), this protein is D-ribose pyranase.